Reading from the N-terminus, the 618-residue chain is DNA mismatch repair protein MutL (618 aa).

The span at 367-381 (EPTAAREPATPRYSG) shows a compositional bias: low complexity. Residues 367 to 402 (EPTAAREPATPRYSGGASGGNGGRQSAGGWPHAQPG) form a disordered region. Positions 382 to 392 (GASGGNGGRQS) are enriched in gly residues.

It belongs to the DNA mismatch repair MutL/HexB family.

This protein is involved in the repair of mismatches in DNA. It is required for dam-dependent methyl-directed DNA mismatch repair. May act as a 'molecular matchmaker', a protein that promotes the formation of a stable complex between two or more DNA-binding proteins in an ATP-dependent manner without itself being part of a final effector complex. This is DNA mismatch repair protein MutL from Salmonella dublin (strain CT_02021853).